We begin with the raw amino-acid sequence, 346 residues long: Uroporphyrinogen decarboxylase (346 aa).

Residues 23–27 (RQAGR), D72, Y155, S209, and H322 each bind substrate.

This sequence belongs to the uroporphyrinogen decarboxylase family. As to quaternary structure, homodimer.

Its subcellular location is the cytoplasm. It catalyses the reaction uroporphyrinogen III + 4 H(+) = coproporphyrinogen III + 4 CO2. It participates in porphyrin-containing compound metabolism; protoporphyrin-IX biosynthesis; coproporphyrinogen-III from 5-aminolevulinate: step 4/4. Its function is as follows. Catalyzes the decarboxylation of four acetate groups of uroporphyrinogen-III to yield coproporphyrinogen-III. This is Uroporphyrinogen decarboxylase from Anaeromyxobacter sp. (strain Fw109-5).